Here is a 265-residue protein sequence, read N- to C-terminus: Lipopolysaccharide core heptose(I) kinase WaaP (265 aa).

Asp162 is a catalytic residue.

The protein belongs to the protein kinase superfamily. KdkA/RfaP family. The cofactor is Mg(2+).

It carries out the reaction an L-alpha-D-Hep-(1-&gt;3)-L-alpha-D-Hep-(1-&gt;5)-[alpha-Kdo-(2-&gt;4)]-alpha-Kdo-(2-&gt;6)-lipid A + ATP = an L-alpha-D-Hep-(1-&gt;3)-4-O-phospho-L-alpha-D-Hep-(1-&gt;5)-[alpha-Kdo-(2-&gt;4)]-alpha-Kdo-(2-&gt;6)-lipid A + ADP + H(+). The enzyme catalyses L-alpha-D-Hep-(1-&gt;3)-L-alpha-D-Hep-(1-&gt;5)-[alpha-Kdo-(2-&gt;4)]-alpha-Kdo-(2-&gt;6)-lipid A (E. coli) + ATP = L-alpha-D-Hep-(1-&gt;3)-4-O-phospho-L-alpha-D-Hep-(1-&gt;5)-[alpha-Kdo-(2-&gt;4)]-alpha-Kdo-(2-&gt;6)-lipid A (E. coli) + ADP + H(+). The protein operates within bacterial outer membrane biogenesis; LPS core biosynthesis. Kinase involved in the biosynthesis of the core oligosaccharide region of lipopolysaccharide (LPS). Catalyzes the phosphorylation of heptose I (HepI), the first heptose added to the Kdo2-lipid A module. The sequence is that of Lipopolysaccharide core heptose(I) kinase WaaP from Escherichia coli (strain K12).